The primary structure comprises 186 residues: Threonylcarbamoyl-AMP synthase (186 aa).

Residues E3–S186 form the YrdC-like domain.

This sequence belongs to the SUA5 family. TsaC subfamily.

The protein localises to the cytoplasm. The enzyme catalyses L-threonine + hydrogencarbonate + ATP = L-threonylcarbamoyladenylate + diphosphate + H2O. Functionally, required for the formation of a threonylcarbamoyl group on adenosine at position 37 (t(6)A37) in tRNAs that read codons beginning with adenine. Catalyzes the conversion of L-threonine, HCO(3)(-)/CO(2) and ATP to give threonylcarbamoyl-AMP (TC-AMP) as the acyladenylate intermediate, with the release of diphosphate. This chain is Threonylcarbamoyl-AMP synthase, found in Stenotrophomonas maltophilia (strain K279a).